Consider the following 281-residue polypeptide: Diaminopimelate epimerase (281 aa).

Residues N13 and N66 each contribute to the substrate site. The active-site Proton donor is C75. Substrate is bound by residues 76–77 (GN), N164, N197, and 215–216 (ER). C224 (proton acceptor) is an active-site residue. Residue 225 to 226 (GT) coordinates substrate.

The protein belongs to the diaminopimelate epimerase family. As to quaternary structure, homodimer.

It is found in the cytoplasm. It carries out the reaction (2S,6S)-2,6-diaminopimelate = meso-2,6-diaminopimelate. It functions in the pathway amino-acid biosynthesis; L-lysine biosynthesis via DAP pathway; DL-2,6-diaminopimelate from LL-2,6-diaminopimelate: step 1/1. Functionally, catalyzes the stereoinversion of LL-2,6-diaminopimelate (L,L-DAP) to meso-diaminopimelate (meso-DAP), a precursor of L-lysine and an essential component of the bacterial peptidoglycan. The protein is Diaminopimelate epimerase of Rippkaea orientalis (strain PCC 8801 / RF-1) (Cyanothece sp. (strain PCC 8801)).